Consider the following 265-residue polypeptide: Adenosylcobinamide-GDP ribazoletransferase (265 aa).

5 helical membrane-spanning segments follow: residues 59–79 (LSWI…SVLI), 113–133 (IGTF…LLLV), 141–161 (WIFL…ALLL), 183–203 (LPPF…VYFL), and 206–226 (FQNQ…FVFY).

Belongs to the CobS family. The cofactor is Mg(2+).

It is found in the cell inner membrane. It carries out the reaction alpha-ribazole + adenosylcob(III)inamide-GDP = adenosylcob(III)alamin + GMP + H(+). The enzyme catalyses alpha-ribazole 5'-phosphate + adenosylcob(III)inamide-GDP = adenosylcob(III)alamin 5'-phosphate + GMP + H(+). It functions in the pathway cofactor biosynthesis; adenosylcobalamin biosynthesis; adenosylcobalamin from cob(II)yrinate a,c-diamide: step 7/7. In terms of biological role, joins adenosylcobinamide-GDP and alpha-ribazole to generate adenosylcobalamin (Ado-cobalamin). Also synthesizes adenosylcobalamin 5'-phosphate from adenosylcobinamide-GDP and alpha-ribazole 5'-phosphate. This is Adenosylcobinamide-GDP ribazoletransferase from Leptospira interrogans serogroup Icterohaemorrhagiae serovar copenhageni (strain Fiocruz L1-130).